The following is a 146-amino-acid chain: Protein US8.5 (146 aa).

The tract at residues 63–93 (LIAIADARGDPPETLPPGAGGAAPACRRPPR) is disordered. A compositionally biased stretch (low complexity) spans 84–93 (AAPACRRPPR).

It belongs to the HHV-1 US8.5 protein family. In terms of processing, phosphorylated.

It is found in the host nucleus. The protein localises to the host nucleolus. The sequence is that of Protein US8.5 from Human herpesvirus 2 (strain HG52) (HHV-2).